Consider the following 273-residue polypeptide: Putative pyruvate, phosphate dikinase regulatory protein (273 aa).

153–160 is an ADP binding site; the sequence is GVSRTSKT.

The protein belongs to the pyruvate, phosphate/water dikinase regulatory protein family. PDRP subfamily.

It carries out the reaction N(tele)-phospho-L-histidyl/L-threonyl-[pyruvate, phosphate dikinase] + ADP = N(tele)-phospho-L-histidyl/O-phospho-L-threonyl-[pyruvate, phosphate dikinase] + AMP + H(+). The catalysed reaction is N(tele)-phospho-L-histidyl/O-phospho-L-threonyl-[pyruvate, phosphate dikinase] + phosphate + H(+) = N(tele)-phospho-L-histidyl/L-threonyl-[pyruvate, phosphate dikinase] + diphosphate. Its function is as follows. Bifunctional serine/threonine kinase and phosphorylase involved in the regulation of the pyruvate, phosphate dikinase (PPDK) by catalyzing its phosphorylation/dephosphorylation. This chain is Putative pyruvate, phosphate dikinase regulatory protein, found in Rhizobium meliloti (strain 1021) (Ensifer meliloti).